We begin with the raw amino-acid sequence, 467 residues long: Vacuolar protein sorting-associated protein 62 (467 aa).

A helical transmembrane segment spans residues 17–37 (FLVTFIIYSIIPCRAVLVPWL). 2 N-linked (GlcNAc...) asparagine glycosylation sites follow: N74 and N145.

Belongs to the VPS62 family.

The protein localises to the membrane. Functionally, involved in vacuolar protein sorting. The polypeptide is Vacuolar protein sorting-associated protein 62 (VPS62) (Saccharomyces cerevisiae (strain ATCC 204508 / S288c) (Baker's yeast)).